The primary structure comprises 657 residues: tRNA 5-methylaminomethyl-2-thiouridine biosynthesis bifunctional protein MnmC (657 aa).

Residues 1 to 239 (MTDRIVPATL…KRAMLVGEFA (239 aa)) form a tRNA (mnm(5)s(2)U34)-methyltransferase region. The tract at residues 263 to 657 (IGAGLAGCAV…VRALRHGRVA (395 aa)) is FAD-dependent cmnm(5)s(2)U34 oxidoreductase.

This sequence in the N-terminal section; belongs to the methyltransferase superfamily. tRNA (mnm(5)s(2)U34)-methyltransferase family. The protein in the C-terminal section; belongs to the DAO family. FAD serves as cofactor.

Its subcellular location is the cytoplasm. The catalysed reaction is 5-aminomethyl-2-thiouridine(34) in tRNA + S-adenosyl-L-methionine = 5-methylaminomethyl-2-thiouridine(34) in tRNA + S-adenosyl-L-homocysteine + H(+). In terms of biological role, catalyzes the last two steps in the biosynthesis of 5-methylaminomethyl-2-thiouridine (mnm(5)s(2)U) at the wobble position (U34) in tRNA. Catalyzes the FAD-dependent demodification of cmnm(5)s(2)U34 to nm(5)s(2)U34, followed by the transfer of a methyl group from S-adenosyl-L-methionine to nm(5)s(2)U34, to form mnm(5)s(2)U34. The protein is tRNA 5-methylaminomethyl-2-thiouridine biosynthesis bifunctional protein MnmC of Burkholderia mallei (strain SAVP1).